Here is an 898-residue protein sequence, read N- to C-terminus: Probable LRR receptor-like serine/threonine-protein kinase At4g20450 (898 aa).

The N-terminal stretch at 1–24 (MEGIHKLIFLALIWIFLITNIVDA) is a signal peptide. The Extracellular segment spans residues 25-535 (QDQQGFISLD…TGPGNNKKKL (511 aa)). Asparagine 40, asparagine 52, asparagine 98, asparagine 247, asparagine 253, asparagine 420, asparagine 443, asparagine 465, asparagine 484, and asparagine 489 each carry an N-linked (GlcNAc...) asparagine glycan. LRR repeat units follow at residues 455–477 (QLQK…LAKM), 479–501 (LLTF…LLNM), and 505–526 (GLIT…ESET). Residues 536 to 556 (LVPILASAASVGIIIAVLLLV) form a helical membrane-spanning segment. The Cytoplasmic segment spans residues 557-898 (NILLLRKKKP…FGPEHIPDAR (342 aa)). Threonine 582 bears the Phosphothreonine mark. Residues 591 to 864 (NNFERPLGEG…QVANELQECL (274 aa)) enclose the Protein kinase domain. Residues 597–605 (LGEGGFGVV) and lysine 619 contribute to the ATP site. Phosphotyrosine is present on tyrosine 664. The active-site Proton acceptor is the aspartate 716. Residue serine 750 is modified to Phosphoserine. The residue at position 751 (threonine 751) is a Phosphothreonine. Tyrosine 764 carries the post-translational modification Phosphotyrosine. A disordered region spans residues 864-898 (LLTENSRKGGRHDVDSKSSLEQSTSFGPEHIPDAR). Residues 868 to 881 (NSRKGGRHDVDSKS) are compositionally biased toward basic and acidic residues.

Belongs to the protein kinase superfamily. Ser/Thr protein kinase family.

It localises to the membrane. The catalysed reaction is L-seryl-[protein] + ATP = O-phospho-L-seryl-[protein] + ADP + H(+). It catalyses the reaction L-threonyl-[protein] + ATP = O-phospho-L-threonyl-[protein] + ADP + H(+). The polypeptide is Probable LRR receptor-like serine/threonine-protein kinase At4g20450 (Arabidopsis thaliana (Mouse-ear cress)).